We begin with the raw amino-acid sequence, 186 residues long: UPF0301 protein Saro_0683 (186 aa).

The protein belongs to the UPF0301 (AlgH) family.

This is UPF0301 protein Saro_0683 from Novosphingobium aromaticivorans (strain ATCC 700278 / DSM 12444 / CCUG 56034 / CIP 105152 / NBRC 16084 / F199).